A 334-amino-acid polypeptide reads, in one-letter code: MTAKMETTFYDDALNASFLQSESGAYGYSNPKILKQSMTLNLADPVGSLKPHLRAKNSDLLTSPDVGLLKLASPELERLIIQSSNGHITTTPTPTQFLCPKNVTDEQEGFAEGFVRALAELHSQNTLPSVTSAAQPVSGAGMVAPAVASVAGAGGGGGYSASLHSEPPVYANLSNFNPGALSSGGGAPSYGAAGLAFPSQPQQQQQPPQPPHHLPQQIPVQHPRLQALKEEPQTVPEMPGETPPLSPIDMESQERIKAERKRMRNRIAASKCRKRKLERIARLEEKVKTLKAQNSELASTANMLREQVAQLKQKVMNHVNSGCQLMLTQQLQTF.

Phosphothreonine; by PAK2 occurs at positions 2 and 8. Glycyl lysine isopeptide (Lys-Gly) (interchain with G-Cter in SUMO2) cross-links involve residues lysine 35 and lysine 50. Residue lysine 56 is modified to N6-acetyllysine; alternate. Residue lysine 56 forms a Glycyl lysine isopeptide (Lys-Gly) (interchain with G-Cter in SUMO2); alternate linkage. Residues serine 58 and serine 63 each carry the phosphoserine modification. Lysine 70 is covalently cross-linked (Glycyl lysine isopeptide (Lys-Gly) (interchain with G-Cter in SUMO2)). Phosphoserine; by MAPK8 and PLK3 is present on serine 73. Threonine 89 carries the post-translational modification Phosphothreonine; by PAK2. Threonine 91 is modified (phosphothreonine). The residue at position 93 (threonine 93) is a Phosphothreonine; by PAK2. The interval 150–226 (VAGAGGGGGY…QIPVQHPRLQ (77 aa)) is interaction with PAGE4. Residues 191-206 (GAAGLAFPSQPQQQQQ) show a composition bias toward low complexity. Residues 191–217 (GAAGLAFPSQPQQQQQPPQPPHHLPQQ) are disordered. Lysine 229 participates in a covalent cross-link: Glycyl lysine isopeptide (Lys-Gly) (interchain with G-Cter in SUMO2). Threonine 242 is subject to Phosphothreonine. A Phosphoserine modification is found at serine 246. Residue serine 252 is modified to Phosphoserine; by GSK3-beta. The basic motif stretch occupies residues 255–282 (RIKAERKRMRNRIAASKCRKRKLERIAR). Residues 255 to 318 (RIKAERKRMR…AQLKQKVMNH (64 aa)) form the bZIP domain. The residue at position 274 (lysine 274) is an N6-acetyllysine. The segment at 283 to 311 (LEEKVKTLKAQNSELASTANMLREQVAQL) is leucine-zipper. Threonine 289 carries the phosphothreonine; by PAK2 modification.

The protein belongs to the bZIP family. Jun subfamily. As to quaternary structure, heterodimer with either BATF3 or ATF7. Heterodimer with FOS. Heterodimer with FOSB isoform 1 and 2. Component of an AP-1 transcription factor complex composed of JUN-FOS heterodimers. As part of the AP-1 transcription factor complex, forms heterodimers with FOSB, thereby binding to the AP-1 consensus sequence and stimulating transcription. The ATF7/JUN heterodimer is essential for ATF7 transactivation activity. Interacts with SP1, SPIB and TCF20. Interacts with COPS5; the interaction leads indirectly to its phosphorylation. Component of the SMAD3/SMAD4/JUN/FOS/complex which forms at the AP1 promoter site. The SMAD3/SMAD4 heterodimer acts synergistically with the JUN/FOS heterodimer to activate transcription in response to TGF-beta. Interacts (via its basic DNA binding and leucine zipper domains) with SMAD3 (via an N-terminal domain); the interaction is required for TGF-beta-mediated transactivation of the SMAD3/SMAD4/JUN/FOS/complex. Interacts with TSC22D3 (via N-terminus); the interaction inhibits the binding of active AP1 to its target DNA. Interacts with HIVEP3 and MYBBP1A. Interacts with methylated RNF187. Binds to HIPK3. Interacts (when phosphorylated) with FBXW7. Interacts with PRR7. Found in a complex with PRR7 and FBXW7. Interacts with PRR7 and FBXW7; the interaction inhibits ubiquitination-mediated JUN degradation promoting its phosphorylation and transcriptional activity. Interacts with RBM39. Interacts with PAGE4. Interacts with FOSL1 and FOSL2. Interacts with ARK2N and CSNK2B; the interaction with ARK2N is mediated by CSNK2B. In terms of processing, phosphorylated by CaMK4 and PRKDC; phosphorylation enhances the transcriptional activity. Phosphorylated by HIPK3. Phosphorylated by DYRK2 at Ser-246; this primes the protein for subsequent phosphorylation by GSK3B at Thr-242. Phosphorylated at Thr-242, Ser-246 and Ser-252 by GSK3B; phosphorylation reduces its ability to bind DNA. Phosphorylated by PAK2 at Thr-2, Thr-8, Thr-89, Thr-93 and Thr-289 thereby promoting JUN-mediated cell proliferation and transformation. Phosphorylated by PLK3 following hypoxia or UV irradiation, leading to increase DNA-binding activity. Phosphorylated by VRK1. Post-translationally, ubiquitinated by the SCF(FBXW7), leading to its degradation. Ubiquitination takes place following phosphorylation, that promotes interaction with FBXW7. Acetylated at Lys-271 by EP300.

Its subcellular location is the nucleus. In terms of biological role, transcription factor that recognizes and binds to the AP-1 consensus motif 5'-TGA[GC]TCA-3'. Heterodimerizes with proteins of the FOS family to form an AP-1 transcription factor complex, thereby enhancing its DNA binding activity to the AP-1 consensus sequence 5'-TGA[GC]TCA-3' and enhancing its transcriptional activity. Together with FOSB, plays a role in activation-induced cell death of T cells by binding to the AP-1 promoter site of FASLG/CD95L, and inducing its transcription in response to activation of the TCR/CD3 signaling pathway. Promotes activity of NR5A1 when phosphorylated by HIPK3 leading to increased steroidogenic gene expression upon cAMP signaling pathway stimulation. Involved in activated KRAS-mediated transcriptional activation of USP28. Binds to the USP28 promoter. This chain is Transcription factor Jun (Jun), found in Mus musculus (Mouse).